Reading from the N-terminus, the 582-residue chain is DnaJ protein ERDJ3A (582 aa).

The signal sequence occupies residues 1-25; sequence MGIPVRSLLVASIVLSSIALHVAAA. A J domain is found at 29-93; that stretch reads DPYKVLGVDK…EKRKNYDLYG (65 aa). N-linked (GlcNAc...) asparagine glycosylation occurs at asparagine 61. The segment at 178–201 is disordered; the sequence is GGSQHTGSAGKARRGTKSSGHDSS. A coiled-coil region spans residues 407 to 437; that stretch reads VKDLRSGIKELKNLLENFEKKNKKLASNQAK.

Interacts with BIP5.

The protein localises to the endoplasmic reticulum. Its subcellular location is the vacuole. Its function is as follows. May play a role in protein folding in the endoplasmic reticulum. The sequence is that of DnaJ protein ERDJ3A from Oryza sativa subsp. japonica (Rice).